The following is a 475-amino-acid chain: MHFETVIGLEVHVELKTDSKMFSPAPAHFGAKPNSNTNVIDLAYPGVLPVVNRRAVDWAMRASMALNMEIATESKFDRKNYFYPDNPKAYQISQFDQPIGENGYIDIEVDGETKRIGITRLHMEEDAGKSTHKDGYSLVDLNRQGTPLIEIVSEPDIRSPQEAYAYLEKLRSIIQYTGVSDCKMEEGSLRCDANISLRPYGQEEFGTKAELKNLNSFTYVRKGLEYEEKRQEEELLNGGEILQETRRFDESNGKTLLMRVKEGSDDYRYFPEPDIVPLYVDEEWKERVRQTIPELPDERKEKYVNQYGLPAYDAHVLTLTKEMSDFFEGAVAEGADVKLTSNWLMGGVNEYLNKNQIDLLDTKLTPENLAGMIKLIEDGTMSSKIAKKVFPELAENGGDAKQIMEDKGLVQISDEATLLKFVNEALDNNEQSIEDYKNGKGKAMGFLVGQIMKASKGQANPQLVNQLLKQELDKR.

The protein belongs to the GatB/GatE family. GatB subfamily. In terms of assembly, heterotrimer of A, B and C subunits.

The catalysed reaction is L-glutamyl-tRNA(Gln) + L-glutamine + ATP + H2O = L-glutaminyl-tRNA(Gln) + L-glutamate + ADP + phosphate + H(+). It catalyses the reaction L-aspartyl-tRNA(Asn) + L-glutamine + ATP + H2O = L-asparaginyl-tRNA(Asn) + L-glutamate + ADP + phosphate + 2 H(+). Its function is as follows. Allows the formation of correctly charged Asn-tRNA(Asn) or Gln-tRNA(Gln) through the transamidation of misacylated Asp-tRNA(Asn) or Glu-tRNA(Gln) in organisms which lack either or both of asparaginyl-tRNA or glutaminyl-tRNA synthetases. The reaction takes place in the presence of glutamine and ATP through an activated phospho-Asp-tRNA(Asn) or phospho-Glu-tRNA(Gln). This is Aspartyl/glutamyl-tRNA(Asn/Gln) amidotransferase subunit B from Staphylococcus saprophyticus subsp. saprophyticus (strain ATCC 15305 / DSM 20229 / NCIMB 8711 / NCTC 7292 / S-41).